The chain runs to 370 residues: Homospermidine synthase (370 aa).

The protein belongs to the deoxyhypusine synthase family. Homotetramer. NAD(+) is required as a cofactor.

It catalyses the reaction putrescine + spermidine = sym-homospermidine + propane-1,3-diamine. It participates in alkaloid biosynthesis; pyrrolizidine alkaloid biosynthesis. In terms of biological role, catalyzes the transfer of an aminobutyl unit from spermidine onto putrescine. The resulting polyamine homospermidine is a precursor in the biosynthesis of pyrrolizidine alkaloids. The protein is Homospermidine synthase (HSS1) of Senecio vulgaris (Common groundsel).